Here is a 289-residue protein sequence, read N- to C-terminus: Phospholipase C (289 aa).

Residues 1–25 (MKFKKVVLGMCLIASVLVFPVTIKA) form the signal peptide. The propeptide occupies 26 to 51 (NACCDEYLQTPAAPHDIDSKLPHKLS). W52, H65, D106, H120, H169, D173, H179, H193, and E197 together coordinate Zn(2+). The Zn-dependent PLC domain occupies 52–289 (WSADNPTNTD…LEFWSKKTNE (238 aa)).

It belongs to the bacterial zinc-metallophospholipase C family. In terms of assembly, forms monomers, dimers and higher order oligomers, but only the monomer is enzymatically active. The cofactor is Zn(2+).

The protein resides in the secreted. It catalyses the reaction a 1,2-diacyl-sn-glycero-3-phosphocholine + H2O = phosphocholine + a 1,2-diacyl-sn-glycerol + H(+). The catalysed reaction is 1,2-dihexadecanoyl-sn-glycero-3-phosphocholine + H2O = 1,2-dihexadecanoyl-sn-glycerol + phosphocholine + H(+). The enzyme catalyses 1-hexadecanoyl-2-(9Z-octadecenoyl)-sn-glycero-3-phosphocholine + H2O = 1-hexadecanoyl-2-(9Z-octadecenoyl)-sn-glycerol + phosphocholine + H(+). It carries out the reaction 1,2-di-(9Z-octadecenoyl)-sn-glycero-3-phosphocholine + H2O = 1,2-di-(9Z-octadecenoyl)-sn-glycerol + phosphocholine + H(+). It catalyses the reaction a 1,2-diacyl-sn-glycero-3-phosphoethanolamine + H2O = phosphoethanolamine + a 1,2-diacyl-sn-glycerol + H(+). The catalysed reaction is 1,2-di-(9Z-octadecenoyl)-sn-glycero-3-phosphoethanolamine + H2O = phosphoethanolamine + 1,2-di-(9Z-octadecenoyl)-sn-glycerol + H(+). The enzyme catalyses 1,2-dihexadecanoyl-sn-glycero-3-phosphoethanolamine + H2O = 1,2-dihexadecanoyl-sn-glycerol + phosphoethanolamine + H(+). It carries out the reaction a 1,2-diacyl-sn-glycero-3-phospho-L-serine + H2O = O-phospho-L-serine + a 1,2-diacyl-sn-glycerol + H(+). It catalyses the reaction a 1,2-diacyl-sn-glycero-3-phosphoglycerol + H2O = glycerol 1-phosphate + a 1,2-diacyl-sn-glycerol + H(+). The catalysed reaction is a 1,2-diacyl-sn-glycero-3-phospho-(1D-myo-inositol) + H2O = 1D-myo-inositol 1-phosphate + a 1,2-diacyl-sn-glycerol + H(+). The enzyme catalyses a sphingomyelin + H2O = phosphocholine + an N-acylsphing-4-enine + H(+). It carries out the reaction a 1-O-(1Z-alkenyl)-2-acyl-sn-glycero-3-phosphoethanolamine + H2O = a 1-O-(1Z-alkenyl)-2-acyl-sn-glycerol + phosphoethanolamine + H(+). Enzymatic activity of LmPC-PLC can be specifically inhibited by its propeptide added in trans. The tendency of the enzyme to oligomerize, which appears to largely attenuate the enzymatic activity, may be one of the mechanisms regulating phospholipase activity in the host cell during the different steps of the infection cycle of L.monocytogenes. Enzyme activity is inhibited by EDTA and o-phenanthroline in vitro. Major virulence factor whose phospholipase activity facilitates pore formation by the pore-forming toxin listeriolysin O (LLO), leading to vacuolar membrane disruption and vacuolar escape of L.monocytogenes, which enables the bacterium to spread in the host. Acts as a phospholipase C exhibiting broad substrate specificity, with the highest activities towards diacylglycerophospholipids with phosphocholine, phosphoserine, and phosphoethanolamine head groups, but less towards phosphoglycerol or phosphoinositol head groups. Is also able to hydrolyze sphingomyelin and plasmenylethanolamine. The protein is Phospholipase C of Listeria monocytogenes serovar 1/2a (strain ATCC BAA-679 / EGD-e).